Here is a 256-residue protein sequence, read N- to C-terminus: Pimeloyl-[acyl-carrier protein] methyl ester esterase (256 aa).

In terms of domain architecture, AB hydrolase-1 spans 15-242 (HLVLLHGWGL…AAHAPFISHP (228 aa)). Substrate-binding positions include Trp22, 82–83 (SL), and 143–147 (FLALQ). Ser82 functions as the Nucleophile in the catalytic mechanism. Catalysis depends on residues Asp207 and His235. His235 contacts substrate.

This sequence belongs to the AB hydrolase superfamily. Carboxylesterase BioH family. Monomer.

The protein resides in the cytoplasm. It carries out the reaction 6-carboxyhexanoyl-[ACP] methyl ester + H2O = 6-carboxyhexanoyl-[ACP] + methanol + H(+). It participates in cofactor biosynthesis; biotin biosynthesis. Functionally, the physiological role of BioH is to remove the methyl group introduced by BioC when the pimeloyl moiety is complete. It allows to synthesize pimeloyl-ACP via the fatty acid synthetic pathway through the hydrolysis of the ester bonds of pimeloyl-ACP esters. This is Pimeloyl-[acyl-carrier protein] methyl ester esterase from Escherichia coli (strain SMS-3-5 / SECEC).